Consider the following 359-residue polypeptide: Protein RecA (359 aa).

Residue 77-84 (GPESSGKT) participates in ATP binding.

The protein belongs to the RecA family.

The protein resides in the cytoplasm. Its function is as follows. Can catalyze the hydrolysis of ATP in the presence of single-stranded DNA, the ATP-dependent uptake of single-stranded DNA by duplex DNA, and the ATP-dependent hybridization of homologous single-stranded DNAs. It interacts with LexA causing its activation and leading to its autocatalytic cleavage. The chain is Protein RecA from Azospirillum lipoferum (strain 4B).